Reading from the N-terminus, the 233-residue chain is UPF0758 protein SRU_2338 (233 aa).

Residues 110 to 232 (QVTCPADVAD…HTSLAERGVI (123 aa)) enclose the MPN domain. Positions 181, 183, and 194 each coordinate Zn(2+). A JAMM motif motif is present at residues 181-194 (HNHPSGNPEPSRED).

Belongs to the UPF0758 family.

This chain is UPF0758 protein SRU_2338, found in Salinibacter ruber (strain DSM 13855 / M31).